The primary structure comprises 216 residues: Adenylate kinase (216 aa).

10–15 (GAGKGT) contributes to the ATP binding site. Positions 30–59 (STGDIFRANIKEKTPLGIEAKRYIDNGQLV) are NMP. Residues T31, R36, 57–59 (QLV), 85–88 (GFPR), and Q92 contribute to the AMP site. The LID stretch occupies residues 126-163 (GRRVCTSCGASYHIRFNPPKIEGKCDICDNELIQRKDD). Residue R127 participates in ATP binding. 2 residues coordinate Zn(2+): C130 and C133. 136-137 (SY) contributes to the ATP binding site. Residues C150 and C153 each contribute to the Zn(2+) site. AMP contacts are provided by R160 and R171. E199 is an ATP binding site.

Belongs to the adenylate kinase family. As to quaternary structure, monomer.

Its subcellular location is the cytoplasm. It carries out the reaction AMP + ATP = 2 ADP. Its pathway is purine metabolism; AMP biosynthesis via salvage pathway; AMP from ADP: step 1/1. Its function is as follows. Catalyzes the reversible transfer of the terminal phosphate group between ATP and AMP. Plays an important role in cellular energy homeostasis and in adenine nucleotide metabolism. The sequence is that of Adenylate kinase from Clostridium botulinum (strain Langeland / NCTC 10281 / Type F).